Reading from the N-terminus, the 161-residue chain is 3-isopropylmalate dehydratase small subunit 1 (161 aa).

This sequence belongs to the LeuD family. LeuD type 2 subfamily. As to quaternary structure, heterodimer of LeuC and LeuD.

It catalyses the reaction (2R,3S)-3-isopropylmalate = (2S)-2-isopropylmalate. It participates in amino-acid biosynthesis; L-leucine biosynthesis; L-leucine from 3-methyl-2-oxobutanoate: step 2/4. Functionally, catalyzes the isomerization between 2-isopropylmalate and 3-isopropylmalate, via the formation of 2-isopropylmaleate. The sequence is that of 3-isopropylmalate dehydratase small subunit 1 (leuD1) from Archaeoglobus fulgidus (strain ATCC 49558 / DSM 4304 / JCM 9628 / NBRC 100126 / VC-16).